The chain runs to 467 residues: ATP synthase subunit beta (467 aa).

Gly-150–Thr-157 is an ATP binding site.

This sequence belongs to the ATPase alpha/beta chains family. F-type ATPases have 2 components, CF(1) - the catalytic core - and CF(0) - the membrane proton channel. CF(1) has five subunits: alpha(3), beta(3), gamma(1), delta(1), epsilon(1). CF(0) has three main subunits: a(1), b(2) and c(9-12). The alpha and beta chains form an alternating ring which encloses part of the gamma chain. CF(1) is attached to CF(0) by a central stalk formed by the gamma and epsilon chains, while a peripheral stalk is formed by the delta and b chains.

It localises to the cell inner membrane. It catalyses the reaction ATP + H2O + 4 H(+)(in) = ADP + phosphate + 5 H(+)(out). Its function is as follows. Produces ATP from ADP in the presence of a proton gradient across the membrane. The catalytic sites are hosted primarily by the beta subunits. This chain is ATP synthase subunit beta, found in Vibrio vulnificus (strain YJ016).